The following is a 124-amino-acid chain: Small ribosomal subunit protein uS13 (124 aa).

The tract at residues 95–124 is disordered; the sequence is GLPVNGQRTRTNARSSKGPRRTVAGKKKAR. The span at 100–109 shows a compositional bias: polar residues; it reads GQRTRTNARS. The segment covering 111–124 has biased composition (basic residues); the sequence is KGPRRTVAGKKKAR.

Belongs to the universal ribosomal protein uS13 family. As to quaternary structure, part of the 30S ribosomal subunit. Forms a loose heterodimer with protein S19. Forms two bridges to the 50S subunit in the 70S ribosome.

Functionally, located at the top of the head of the 30S subunit, it contacts several helices of the 16S rRNA. In the 70S ribosome it contacts the 23S rRNA (bridge B1a) and protein L5 of the 50S subunit (bridge B1b), connecting the 2 subunits; these bridges are implicated in subunit movement. Contacts the tRNAs in the A and P-sites. This chain is Small ribosomal subunit protein uS13, found in Tropheryma whipplei (strain TW08/27) (Whipple's bacillus).